A 401-amino-acid chain; its full sequence is MVLPKIKEVRAWFTGGATAEKGAGGADYHDQGNHHWIDDHIATPMSKYKQYEQSRQSFGINVLGTLVIEVEADNGQIGFAVSTAGEMGCFIVEKHLNRFIEGKCVSDIKLIHDQMLGATMYYAGSGGLVMNTISCVDLALWDLFGKVVGLPVYKLLGGAVRDEIQFYATGARPDLAKEMGFIGGKMPTHWGPHDGDKGIRKDAAMVAEYREKCGPDFWLMLDCWMSQDVNYATKLAYACAPYNLKWIEECLPPQQYEGYRELKRNAPPGMMVTSGEHHGTLQSFQTLSETGIDIMQPDVGWCGGLTTLVEVAAIAKARGQLVVPHGSSVYSHHAVITFTNTPFSEFLMTSPDCSVLRPQFDPILINEPVPVNGRIHKSVLDKPGFGVELNRDCKLKRPYTH.

2 residues coordinate substrate: His29 and Arg55. Positions 222, 248, and 276 each coordinate Mg(2+). His325 serves as the catalytic Proton acceptor. A substrate-binding site is contributed by Glu345.

This sequence belongs to the mandelate racemase/muconate lactonizing enzyme family. RhamD subfamily. Homooctamer; tetramer of dimers. The cofactor is Mg(2+).

It carries out the reaction L-rhamnonate = 2-dehydro-3-deoxy-L-rhamnonate + H2O. In terms of biological role, catalyzes the dehydration of L-rhamnonate to 2-keto-3-deoxy-L-rhamnonate (KDR). The polypeptide is L-rhamnonate dehydratase (Tolumonas auensis (strain DSM 9187 / NBRC 110442 / TA 4)).